The sequence spans 1408 residues: MKDLLKFLKAQTKTEEFDAIKIALASPDMIRSWSFGEVKKPETINYRTFKPERDGLFCARIFGPVKDYECLCGKYKRLKHRGVICEKCGVEVTQTKVRRERMGHIELASPTAHIWFLKSLPSRIGLLLDMPLRDIERVLYFESYVVIEGGMTNLERRQILTEEQYLDALEEFGDEFDAKMGAEAIQALLKNMDLEQECETLREELNETNSETKRKKLTKRIKLLEAFVQSGNKPEWMILTVLPVLPPDLRPLVPLDGGRFATSDLNDLYRRVINRNNRLKRLLDLAAPDIIVRNEKRMLQEAVDALLDNGRRGRAITGSNKRPLKSLADMIKGKQGRFRQNLLGKRVDYSGRSVITVGPYLRLHQCGLPKKMALELFKPFIYGKLELRGLATTIKAAKKMVEREEAVVWDILDEVIREHPVLLNRAPTLHRLGIQAFEPVLIEGKAIQLHPLVCAAYNADFDGDQMAVHVPLTLEAQLEARALMMSTNNILSPANGEPIIVPSQDVVLGLYYMTRDCVNAKGEGMVLSGPKEAERIYRAGLASLHARVKVRITEEIKNTEGESVHQTSIVDTTVGRAILWMIVPRGLPYSIVNQPLGKKAISKMLNTCYRILGLKPTVIFADQIMYTGFAYAARSGASVGIDDMVIPAKKAEIIEEAETEVAEIQEQFQSGLVTAGERYNKVIDIWAAANERVAKAMMENLSVEDVVNRDGVVEQQVSFNSIFMMADSGARGSAAQIRQLAGMRGLMAKPDGSIIETPITANFREGLNVLQYFISTHGARKGLADTALKTANSGYLTRRLVDVAQDLVVTEDDCGTHNGIMMTPVIEGGDVKEPLRERVLGRVTAEDIIKPGTADILVPRNTLLHEKTCDLLEENSVDSVKVRSVVSCETDFGVCANCYGRDLARGHIINKGEAIGVIAAQSIGEPGTQLTMRTFHIGGAASRAAAESSIQVKNKGTLKLSNVKFVMNAAGKLVITSRNTELKLIDEFGRTKERYKVPYGSVMGKGDGMEVNGGETVANWDPHTMPVITEVSGFIRFADMVDGQTITRQTDELTGLSSLVVLDSAERTGSGKDLRPALKIVDAKGDDVLIPGTDMPAQYFLPGKAIVQLEDGIQIGAGDTLARIPQESGGTKDITGGLPRVADLFEARRPKEPAILAEISGIISFGKETKGKRRLVISPLDGSDAYEEMIPKWRQLNVFEGEVVERGDVVSDGPESPHDILRLRGVHAVTRYITNEVQEVYRLQGVKINDKHIEVIVRQMLRKGTIVSAGGTEFLEGEQAEVSRVKIANRQLAAEGKIEATFSRDLLGITKASLATESFISAASFQETTRVLTEAAVAGKRDELRGLKENVIVGRLIPAGTGYAYHQDRMRRKAQGETPVVPQVSAEEATANLAELLNAGNLGGGNND.

Residues Cys70, Cys72, Cys85, and Cys88 each coordinate Zn(2+). Mg(2+) contacts are provided by Asp460, Asp462, and Asp464. 4 residues coordinate Zn(2+): Cys814, Cys888, Cys895, and Cys898.

The protein belongs to the RNA polymerase beta' chain family. As to quaternary structure, the RNAP catalytic core consists of 2 alpha, 1 beta, 1 beta' and 1 omega subunit. When a sigma factor is associated with the core the holoenzyme is formed, which can initiate transcription. Mg(2+) serves as cofactor. Zn(2+) is required as a cofactor.

It carries out the reaction RNA(n) + a ribonucleoside 5'-triphosphate = RNA(n+1) + diphosphate. Functionally, DNA-dependent RNA polymerase catalyzes the transcription of DNA into RNA using the four ribonucleoside triphosphates as substrates. The chain is DNA-directed RNA polymerase subunit beta' from Serratia proteamaculans (strain 568).